The following is a 1398-amino-acid chain: Pyrolysin (1398 aa).

The first 26 residues, M1–A26, serve as a signal peptide directing secretion. A propeptide spanning residues G27–K149 is cleaved from the precursor. A glycan (N-linked (GlcNAc...) asparagine) is linked at N152. The Peptidase S8 domain maps to T154 to W656. D179 functions as the Charge relay system in the catalytic mechanism. N222, N228, N240, N257, N262, N298, and N327 each carry an N-linked (GlcNAc...) asparagine glycan. The active-site Charge relay system is the H365. A glycan (N-linked (GlcNAc...) asparagine) is linked at N406. Residue S590 is the Charge relay system of the active site. N-linked (GlcNAc...) asparagine glycosylation is found at N651, N663, N739, N792, N893, N908, N917, N929, N1048, N1056, N1084, N1117, N1133, N1140, N1148, N1208, N1233, N1237, and N1332.

It belongs to the peptidase S8 family. In terms of processing, LWM pyrolysin seems to be produced by autoproteolytic activation of HMW pyrolysin. Glycosylated.

Its subcellular location is the cell envelope. In terms of biological role, has endopeptidase activity toward caseins, casein fragments including alpha-S1-casein and synthetic peptides. In Pyrococcus furiosus (strain ATCC 43587 / DSM 3638 / JCM 8422 / Vc1), this protein is Pyrolysin (pls).